A 1124-amino-acid polypeptide reads, in one-letter code: tRNA (34-2'-O)-methyltransferase regulator WDR6 (1124 aa).

M1 is subject to N-acetylmethionine. WD repeat units follow at residues 53 to 97 (MKRV…IVKI), 105 to 143 (RELW…LYDP), 147 to 189 (CSLQ…VWYP), 200 to 238 (VPDR…IWKV), 247 to 285 (RVQN…VWSH), 289 to 327 (ILQA…LWHL), 335 to 376 (SGVF…LYDL), 381 to 422 (WEQL…VVPI), 425 to 470 (PTAA…ISAA), 476 to 520 (IFVK…LYPS), 557 to 596 (PMST…FVRG), 602 to 640 (VLRQ…VWSP), 643 to 682 (HEKL…LYRA), 743 to 789 (LIDI…VWGV), 852 to 897 (RHRH…LFLL), 905 to 950 (QLLA…FWDL), 974 to 1015 (GSPC…VFVL), 1039 to 1076 (EEYS…FWRL), and 1082 to 1124 (TFMN…NWYD).

Belongs to the WD repeat WDR6 family. As to quaternary structure, interacts with FTSJ1; the interaction is direct, and required for 2'-O-methylation of position 34 in substrate tRNAs. Interacts with IRS4. Interacts with STK11/LKB1.

It is found in the cytoplasm. Together with methyltransferase FTSJ1, methylates the 2'-O-ribose of nucleotides at position 34 of the tRNA anticodon loop of substrate tRNAs. Required for the correct positioning of the substrate tRNA for methylation. Required to suppress amino acid starvation-induced autophagy. Enhances the STK11/LKB1-induced cell growth suppression activity. This Bos taurus (Bovine) protein is tRNA (34-2'-O)-methyltransferase regulator WDR6 (WDR6).